The primary structure comprises 467 residues: ATP-dependent protease ATPase subunit HslU (467 aa).

ATP is bound by residues V22 and 64-69; that span reads GVGKTE. Residues 149–192 are disordered; sequence QTNNPLESLFGGAIPNFGQNNEDEEEPPTEEIKTKRSEIKRQLE. A compositionally biased stretch (basic and acidic residues) spans 178–192; the sequence is EEIKTKRSEIKRQLE. ATP-binding residues include D280, E345, and R417.

It belongs to the ClpX chaperone family. HslU subfamily. As to quaternary structure, a double ring-shaped homohexamer of HslV is capped on each side by a ring-shaped HslU homohexamer. The assembly of the HslU/HslV complex is dependent on binding of ATP.

The protein localises to the cytoplasm. In terms of biological role, ATPase subunit of a proteasome-like degradation complex; this subunit has chaperone activity. The binding of ATP and its subsequent hydrolysis by HslU are essential for unfolding of protein substrates subsequently hydrolyzed by HslV. HslU recognizes the N-terminal part of its protein substrates and unfolds these before they are guided to HslV for hydrolysis. In Staphylococcus aureus (strain MRSA252), this protein is ATP-dependent protease ATPase subunit HslU.